The chain runs to 456 residues: Proline--tRNA ligase (456 aa).

It belongs to the class-II aminoacyl-tRNA synthetase family. ProS type 3 subfamily. In terms of assembly, homodimer.

It is found in the cytoplasm. The enzyme catalyses tRNA(Pro) + L-proline + ATP = L-prolyl-tRNA(Pro) + AMP + diphosphate. Catalyzes the attachment of proline to tRNA(Pro) in a two-step reaction: proline is first activated by ATP to form Pro-AMP and then transferred to the acceptor end of tRNA(Pro). This is Proline--tRNA ligase from Methanococcus aeolicus (strain ATCC BAA-1280 / DSM 17508 / OCM 812 / Nankai-3).